We begin with the raw amino-acid sequence, 188 residues long: Ion-translocating oxidoreductase complex subunit B (188 aa).

Residues 1 to 26 (MNGVLLAIGVLLPICLASGALLGYAA) are hydrophobic. In terms of domain architecture, 4Fe-4S spans 32–90 (QGDPVAERVNALLPQTQCGQCGYPGCKPYAEAIAAGDRINKCPPGGEATIQALADLLDL). Cys-49, Cys-52, Cys-57, Cys-73, Cys-113, Cys-116, Cys-119, Cys-123, Cys-143, Cys-146, Cys-149, and Cys-153 together coordinate [4Fe-4S] cluster. 4Fe-4S ferredoxin-type domains lie at 104-133 (RVAY…GAAR) and 134-163 (LMHT…MREI).

It belongs to the 4Fe4S bacterial-type ferredoxin family. RnfB subfamily. The complex is composed of six subunits: RnfA, RnfB, RnfC, RnfD, RnfE and RnfG. The cofactor is [4Fe-4S] cluster.

The protein localises to the cell inner membrane. Functionally, part of a membrane-bound complex that couples electron transfer with translocation of ions across the membrane. The sequence is that of Ion-translocating oxidoreductase complex subunit B from Pseudomonas paraeruginosa (strain DSM 24068 / PA7) (Pseudomonas aeruginosa (strain PA7)).